Reading from the N-terminus, the 459-residue chain is Argininosuccinate lyase (459 aa).

The protein belongs to the lyase 1 family. Argininosuccinate lyase subfamily.

The protein resides in the cytoplasm. The enzyme catalyses 2-(N(omega)-L-arginino)succinate = fumarate + L-arginine. Its pathway is amino-acid biosynthesis; L-arginine biosynthesis; L-arginine from L-ornithine and carbamoyl phosphate: step 3/3. The polypeptide is Argininosuccinate lyase (Photorhabdus laumondii subsp. laumondii (strain DSM 15139 / CIP 105565 / TT01) (Photorhabdus luminescens subsp. laumondii)).